The sequence spans 134 residues: 15.4 kDa class V heat shock protein (134 aa).

The 108-residue stretch at 19–126 (SLNNYQENHV…LIDPSDVPES (108 aa)) folds into the sHSP domain.

This sequence belongs to the small heat shock protein (HSP20) family. May form oligomeric structures.

It is found in the cytoplasm. The protein is 15.4 kDa class V heat shock protein (HSP15.4) of Arabidopsis thaliana (Mouse-ear cress).